A 555-amino-acid chain; its full sequence is CTP synthase (555 aa).

An amidoligase domain region spans residues 1 to 267 (MAKYIFVTGG…GNYLTLRLGL (267 aa)). S13 provides a ligand contact to CTP. Residue S13 participates in UTP binding. An ATP-binding site is contributed by 14-19 (SVGKGI). Residue Y54 coordinates L-glutamine. D71 provides a ligand contact to ATP. Residues D71 and E141 each contribute to the Mg(2+) site. Residues 148–150 (DIE), 188–193 (KTKPTQ), and K224 each bind CTP. Residues 188–193 (KTKPTQ) and K224 each bind UTP. A Glutamine amidotransferase type-1 domain is found at 292-535 (AIALVGKYVE…IAAAAQTFRE (244 aa)). G354 lines the L-glutamine pocket. C381 functions as the Nucleophile; for glutamine hydrolysis in the catalytic mechanism. L-glutamine is bound by residues 382–385 (LGMQ), E406, and R463. Active-site residues include H508 and E510.

This sequence belongs to the CTP synthase family. In terms of assembly, homotetramer.

The enzyme catalyses UTP + L-glutamine + ATP + H2O = CTP + L-glutamate + ADP + phosphate + 2 H(+). It carries out the reaction L-glutamine + H2O = L-glutamate + NH4(+). It catalyses the reaction UTP + NH4(+) + ATP = CTP + ADP + phosphate + 2 H(+). The protein operates within pyrimidine metabolism; CTP biosynthesis via de novo pathway; CTP from UDP: step 2/2. Its activity is regulated as follows. Allosterically activated by GTP, when glutamine is the substrate; GTP has no effect on the reaction when ammonia is the substrate. The allosteric effector GTP functions by stabilizing the protein conformation that binds the tetrahedral intermediate(s) formed during glutamine hydrolysis. Inhibited by the product CTP, via allosteric rather than competitive inhibition. Its function is as follows. Catalyzes the ATP-dependent amination of UTP to CTP with either L-glutamine or ammonia as the source of nitrogen. Regulates intracellular CTP levels through interactions with the four ribonucleotide triphosphates. The chain is CTP synthase from Roseiflexus castenholzii (strain DSM 13941 / HLO8).